A 205-amino-acid polypeptide reads, in one-letter code: Deoxyuridine 5'-triphosphate nucleotidohydrolase (205 aa).

At S54 the chain carries Phosphoserine. Substrate-binding positions include 126-128, 140-143, G151, and 199-200; these read RSG, GVID, and FG.

Belongs to the dUTPase family. In terms of assembly, homotrimer. The cofactor is Mg(2+). In terms of tissue distribution, expressed in all tissues examined. Higher levels in heart and kidney.

The protein resides in the cytoplasm. The protein localises to the nucleus. The catalysed reaction is dUTP + H2O = dUMP + diphosphate + H(+). It functions in the pathway pyrimidine metabolism; dUMP biosynthesis; dUMP from dCTP (dUTP route): step 2/2. In terms of biological role, catalyzes the cleavage of 2'-deoxyuridine 5'-triphosphate (dUTP) into 2'-deoxyuridine 5'-monophosphate (dUMP) and inorganic pyrophosphate and through its action efficiently prevents uracil misincorporation into DNA and at the same time provides dUMP, the substrate for de novo thymidylate biosynthesis. Inhibits peroxisome proliferator-activated receptor (PPAR) activity by binding of its N-terminal to PPAR, preventing the latter's dimerization with retinoid X receptor. Essential for embryonic development. This Rattus norvegicus (Rat) protein is Deoxyuridine 5'-triphosphate nucleotidohydrolase (Dut).